The chain runs to 195 residues: uncharacterized protein (195 aa).

Residues 1–11 are compositionally biased toward polar residues; it reads MDYIVSPTSSE. Positions 1 to 118 are disordered; that stretch reads MDYIVSPTSS…LDTEGGFVLS (118 aa). Positions 35–46 are enriched in acidic residues; sequence SPEDITDSDEQN. The segment covering 47–63 has biased composition (low complexity); it reads DTTTTTSEMSSTSSVPS. Basic and acidic residues predominate over residues 82-93; the sequence is SDSKLIFDSDNK. The span at 94–110 shows a compositional bias: acidic residues; the sequence is DQDDEDDEDDEELEGLD.

This is an uncharacterized protein from Acanthamoeba polyphaga mimivirus (APMV).